The sequence spans 440 residues: Gap junction gamma-2 protein (440 aa).

The Cytoplasmic segment spans residues 1-21; sequence MTNMSWSFLTRLLEEIHNHST. A helical transmembrane segment spans residues 22-42; it reads FVGKVWLTVLVVFRIVLTAVG. The Extracellular portion of the chain corresponds to 43–78; that stretch reads GESIYSDEQSKFTCNTRQPGCDNVCYDAFAPLSHVR. A helical transmembrane segment spans residues 79-99; the sequence is FWVFQIVVISTPSVMYLGYAV. At 100 to 223 the chain is on the cytoplasmic side; it reads HRLARASEQE…AQLVVRAAFE (124 aa). Residues 108 to 199 form a disordered region; sequence QERRRALRRR…TPGPAGQHDG (92 aa). The span at 112–124 shows a compositional bias: basic residues; the sequence is RALRRRPGPRRLP. The segment covering 150–173 has biased composition (acidic residues); it reads LEEDEDEEPGAPEGPGEDTEEERT. Residues 224 to 244 form a helical membrane-spanning segment; that stretch reads VAFLVGQYLLYGFEVPPFFAC. Residues 245-264 are Extracellular-facing; that stretch reads SRQPCPHVVDCFVSRPTEKT. A helical membrane pass occupies residues 265–285; the sequence is VFLLVMYVVSCLCLLLNLCEM. At 286–440 the chain is on the cytoplasmic side; that stretch reads AHLGLGSAQD…SRDGKATVWI (155 aa). The tract at residues 368–440 is disordered; the sequence is ADRDSPPCSG…SRDGKATVWI (73 aa). Residue S372 is modified to Phosphoserine. Residues 380–401 show a composition bias toward low complexity; it reads ATSRGPPRAGGPASGTGSATSG.

This sequence belongs to the connexin family. Gamma-type subfamily. As to quaternary structure, a connexon is composed of a hexamer of connexins. Interacts with TJP1. As to expression, mainly expressed by oligodendrocytes in the central nervous system. Expressed in optic nerve (at protein level).

It localises to the cell membrane. It is found in the cell junction. The protein localises to the gap junction. One gap junction consists of a cluster of closely packed pairs of transmembrane channels, the connexons, through which materials of low MW diffuse from one cell to a neighboring cell. May play a role in myelination in central and peripheral nervous systems. This chain is Gap junction gamma-2 protein (Gjc2), found in Rattus norvegicus (Rat).